A 314-amino-acid polypeptide reads, in one-letter code: Pyridoxal 5'-phosphate synthase-like subunit PDX1.2 (314 aa).

Position 2 is an N-acetylalanine (Ala-2).

Belongs to the PdxS/SNZ family. As to quaternary structure, homodimer or heterodimer with PDX1.1 or PDX1.3. No interaction with PDX2. In terms of tissue distribution, expressed in callus tissues, flowers and roots. Weakly expressed in leaves and stems.

The protein localises to the cytoplasm. The protein has no function in the formation of pyridoxal 5'-phosphate. This is Pyridoxal 5'-phosphate synthase-like subunit PDX1.2 (PDX12) from Arabidopsis thaliana (Mouse-ear cress).